The chain runs to 457 residues: MEGGTNDGAAVPGNGAGTAGSIFWWLKNRCLGRGLCVDPARDNFRTMTSLYSSIHPADSVNLSTRTHGAVFNLEYSPDGSVLTVACEQTEVLLFDPVSSKHIKTLSEAHEDCVNNIRFLDNRMFATCSDDTTIALWDLRKLNSKVCTLHGHTSWVKNIEYDTNTRLLVTSGFDGNVIIWDTNRCTEDGCPHKKFFHTRFLMRMRLTPDCSKMLISTSSGYLLILHELDLTKSLEVGSYPILRARRTASTSDMTSTSSDTRPSSSPCHNSDLGPLFEKHMSRSSQREGASPRNSLEVLTPEVPGERDRGNCITSLQLHPKGWATLLRCSSNTDDQEWTCVYEFQEGAPVRQVSPRCSLRLTHYIEEANVGRGYIKELCFSPDGRMIASPYAYGIRLLGFDSQCKELVDCLPKEAGTLQVIRSLYSHKDVVLTTKFSPTHCQIASGCLSGRVTLYQPKF.

WD repeat units lie at residues 65–104 (RTHG…HIKT), 108–146 (AHED…SKVC), 150–189 (GHTS…EDGC), and 195–234 (FHTR…KSLE). The segment covering 246-265 (TASTSDMTSTSSDTRPSSSP) has biased composition (low complexity). The disordered stretch occupies residues 246–304 (TASTSDMTSTSSDTRPSSSPCHNSDLGPLFEKHMSRSSQREGASPRNSLEVLTPEVPGE). Residues 281 to 292 (RSSQREGASPRN) show a composition bias toward polar residues. WD repeat units follow at residues 306 to 346 (DRGN…QEGA), 368 to 406 (VGRG…KELV), and 424 to 457 (SHKD…QPKF).

The protein belongs to the WD repeat DCAF10 family.

The protein operates within protein modification; protein ubiquitination. May function as a substrate receptor for CUL4-DDB1 E3 ubiquitin-protein ligase complex. This is DDB1- and CUL4-associated factor 10 (dcaf10) from Xenopus tropicalis (Western clawed frog).